A 199-amino-acid polypeptide reads, in one-letter code: Single-stranded DNA cytosine deaminase (199 aa).

Positions 1–30 (MDSLLKKQRQFLYQFKNVRWAKGRHETYLC) match the Bipartite nuclear localization signal motif. The interaction with SUPT6H stretch occupies residues 2-26 (DSLLKKQRQFLYQFKNVRWAKGRHE). Residues 23–130 (GRHETYLCYV…KAEPEGLRRL (108 aa)) enclose the CMP/dCMP-type deaminase domain. Thr-27 carries the post-translational modification Phosphothreonine; by PKA. The residue at position 38 (Ser-38) is a Phosphoserine; by PKA. Positions 39 to 42 (PTSF) are important for interaction with CTNNBL1. His-56 lines the Zn(2+) pocket. Glu-58 functions as the Proton donor in the catalytic mechanism. The Zn(2+) site is built by Cys-87 and Cys-90. Residues 88–116 (YDCARHVADFLRGYPNLSLRIFTARLYFC) are required for interaction with RNF126. The Nuclear export signal signature appears at 184–199 (LYEVDDLRDAFRTLGL).

This sequence belongs to the cytidine and deoxycytidylate deaminase family. Interacts with CTNNBL1; the interaction is important for the immunoglobulin switch activity of AICDA. Interacts (via its NLS) with KPNA1. Interacts with PKA/PRKACA and PRKAR1A/PKR1. Interacts with SUPT6H, TRIM28 and NCL. Directly interacts with MCM3AP; this interaction may favor AICDA recruitment to immunoglobulin variable region genes, hence promoting somatic hypermutations. Zn(2+) serves as cofactor. Post-translationally, ser-38 is the major site whereas Thr-27 is the minor site of phosphorylation. Phosphorylation regulates its class-switch recombination activity. Probably monoubiquitinated on several residues by RNF126. Expressed in lymph nodes, spleen and thymus.

It localises to the nucleus. It is found in the cytoplasm. The catalysed reaction is a 2'-deoxycytidine in single-stranded DNA + H2O + H(+) = a 2'-deoxyuridine in single-stranded DNA + NH4(+). Single-stranded DNA-specific cytidine deaminase. Involved in somatic hypermutation (SHM), gene conversion, and class-switch recombination (CSR) in B-lymphocytes by deaminating C to U during transcription of Ig-variable (V) and Ig-switch (S) region DNA. Required for several crucial steps of B-cell terminal differentiation necessary for efficient antibody responses. May also play a role in the epigenetic regulation of gene expression by participating in DNA demethylation. The chain is Single-stranded DNA cytosine deaminase (AICDA) from Bos taurus (Bovine).